The primary structure comprises 299 residues: Bifunctional protein FolD 2 (299 aa).

Belongs to the tetrahydrofolate dehydrogenase/cyclohydrolase family. As to quaternary structure, homodimer.

It catalyses the reaction (6R)-5,10-methylene-5,6,7,8-tetrahydrofolate + NADP(+) = (6R)-5,10-methenyltetrahydrofolate + NADPH. The enzyme catalyses (6R)-5,10-methenyltetrahydrofolate + H2O = (6R)-10-formyltetrahydrofolate + H(+). Its pathway is one-carbon metabolism; tetrahydrofolate interconversion. Functionally, catalyzes the oxidation of 5,10-methylenetetrahydrofolate to 5,10-methenyltetrahydrofolate and then the hydrolysis of 5,10-methenyltetrahydrofolate to 10-formyltetrahydrofolate. In Arabidopsis thaliana (Mouse-ear cress), this protein is Bifunctional protein FolD 2 (FOLD2).